The primary structure comprises 502 residues: Probable glycine dehydrogenase (decarboxylating) subunit 2 (502 aa).

Lys-273 carries the N6-(pyridoxal phosphate)lysine modification.

Belongs to the GcvP family. C-terminal subunit subfamily. In terms of assembly, the glycine cleavage system is composed of four proteins: P, T, L and H. In this organism, the P 'protein' is a heterodimer of two subunits. Requires pyridoxal 5'-phosphate as cofactor.

The enzyme catalyses N(6)-[(R)-lipoyl]-L-lysyl-[glycine-cleavage complex H protein] + glycine + H(+) = N(6)-[(R)-S(8)-aminomethyldihydrolipoyl]-L-lysyl-[glycine-cleavage complex H protein] + CO2. In terms of biological role, the glycine cleavage system catalyzes the degradation of glycine. The P protein binds the alpha-amino group of glycine through its pyridoxal phosphate cofactor; CO(2) is released and the remaining methylamine moiety is then transferred to the lipoamide cofactor of the H protein. The chain is Probable glycine dehydrogenase (decarboxylating) subunit 2 from Pyrococcus abyssi (strain GE5 / Orsay).